A 999-amino-acid chain; its full sequence is Multiple C2 and transmembrane domain-containing protein 1 (999 aa).

Residues 1–19 (MEPRAAAAGEPEPPAASSS) show a composition bias toward low complexity. Residues 1–241 (MEPRAAAAGE…TGEEHGSSQK (241 aa)) are disordered. Residues 34 to 44 (RSKGGGGGRAG) are compositionally biased toward gly residues. Over residues 65-79 (GNAPARGSGAGSRWS) the composition is skewed to low complexity. Positions 92 to 101 (FSSSQPNLCC) are enriched in polar residues. Composition is skewed to low complexity over residues 131–141 (PAVKGPAAASG) and 149–169 (GGRS…LSSS). 2 stretches are compositionally biased toward basic and acidic residues: residues 175–185 (RGDRARDEGAR) and 228–238 (RAPETGEEHGS). C2 domains are found at residues 242-360 (IINT…DVTL), 452-569 (QTQS…KLEL), and 603-724 (QKER…AYVL). Aspartate 277, aspartate 283, aspartate 330, aspartate 332, aspartate 338, aspartate 486, aspartate 492, aspartate 539, aspartate 541, aspartate 547, aspartate 642, aspartate 648, aspartate 694, aspartate 696, and aspartate 702 together coordinate Ca(2+). Helical transmembrane passes span 811–831 (FVLF…LVLL) and 914–934 (PFLS…LYCI).

The protein belongs to the MCTP family. Ca(2+) is required as a cofactor.

The protein resides in the cytoplasmic vesicle. It localises to the secretory vesicle. It is found in the synaptic vesicle membrane. The protein localises to the recycling endosome. Its subcellular location is the endoplasmic reticulum membrane. Functionally, calcium sensor which is essential for the stabilization of normal baseline neurotransmitter release and for the induction and long-term maintenance of presynaptic homeostatic plasticity. The polypeptide is Multiple C2 and transmembrane domain-containing protein 1 (MCTP1) (Homo sapiens (Human)).